We begin with the raw amino-acid sequence, 546 residues long: Hexose oxidase (546 aa).

The 183-residue stretch at 40–222 folds into the FAD-binding PCMH-type domain; the sequence is IGTNIDFVYV…TKYYFKDLPM (183 aa). Residues 79 to 138 constitute a cross-link (6-(S-cysteinyl)-8alpha-(pros-histidyl)-FAD (His-Cys)); the sequence is HCYEDFVFDECVKAIINVTGLVESGYDDDRGYFVSSGDTNWGSFKTLFRDHGRVLPGGSC. N-linked (GlcNAc...) asparagine glycosylation is found at asparagine 95 and asparagine 358.

Belongs to the oxygen-dependent FAD-linked oxidoreductase family. In terms of assembly, homodimer. The cofactor is FAD. Post-translationally, cleaved into 40 kDa and 29 kDa cleavage products, but the 2 polypeptide chains do not separate and seem to be physically linked together. The FAD cofactor is bound via a bicovalent 6-S-cysteinyl, 8alpha-N1-histidyl FAD linkage.

The catalysed reaction is beta-D-glucose + O2 = D-glucono-1,5-lactone + H2O2. It carries out the reaction D-galactose + O2 = D-galactono-1,5-lactone + H2O2. It catalyses the reaction D-maltose + O2 = D-maltobiono-1,5-lactone + H2O2. The enzyme catalyses D-cellobiose + O2 = D-cellobiono-1,5-lactone + H2O2. The catalysed reaction is beta-lactose + O2 = lactobiono-1,5-lactone + H2O2. Its function is as follows. Catalyzes the selective oxidation of C1 hydroxyl moieties on mono- and disaccharides with concomitant reduction of molecular oxygen to hydrogen peroxide. This results in the formation of the corresponding lactones, which typically undergo spontaneous hydrolysis. Hexose oxidase is able to oxidize a variety of substrates including D-glucose, D-galactose, maltose, cellobiose, and lactose. The chain is Hexose oxidase (HOX) from Chondrus crispus (Carrageen Irish moss).